Reading from the N-terminus, the 503-residue chain is Nuclear respiratory factor 1 (503 aa).

The dimerization stretch occupies residues 1–78 (MEEHGVTQTE…AHLAAAGPVG (78 aa)). Positions 36–57 (SMLSADEDSPSSPEDTSYDDSD) are disordered. 5 positions are modified to phosphoserine; by CK2: S39, S44, S46, S47, and S52. The short motif at 88 to 116 (GKKRKRPHVFESNPSIRKRQQTRLLRKLR) is the Nuclear localization signal element. A DNA-binding region spans residues 109 to 305 (TRLLRKLRAT…SIAHLVPSQT (197 aa)). A Glycyl lysine isopeptide (Lys-Gly) (interchain with G-Cter in SUMO2) cross-link involves residue K139. Residues 301–476 (VPSQTVVQTF…AQGNGPVQVA (176 aa)) are required for transcriptional activation.

This sequence belongs to the NRF1/Ewg family. In terms of assembly, homodimer. Binds DNA as a dimer. Interacts with PPRC1. Phosphorylation enhances DNA binding. In terms of tissue distribution, widely expressed in embryonic, fetal, and adult tissues.

It localises to the nucleus. Functionally, transcription factor that activates the expression of the EIF2S1 (EIF2-alpha) gene. Links the transcriptional modulation of key metabolic genes to cellular growth and development. Implicated in the control of nuclear genes required for respiration, heme biosynthesis, and mitochondrial DNA transcription and replication. In Mus musculus (Mouse), this protein is Nuclear respiratory factor 1 (Nrf1).